The sequence spans 206 residues: Ribosomal RNA small subunit methyltransferase G (206 aa).

S-adenosyl-L-methionine-binding positions include Gly-73, Leu-78, 124 to 125, and Arg-139; that span reads VE.

The protein belongs to the methyltransferase superfamily. RNA methyltransferase RsmG family.

The protein resides in the cytoplasm. It catalyses the reaction guanosine(527) in 16S rRNA + S-adenosyl-L-methionine = N(7)-methylguanosine(527) in 16S rRNA + S-adenosyl-L-homocysteine. Specifically methylates the N7 position of guanine in position 527 of 16S rRNA. This Pectobacterium carotovorum subsp. carotovorum (strain PC1) protein is Ribosomal RNA small subunit methyltransferase G.